The primary structure comprises 61 residues: Large ribosomal subunit protein eL37 (61 aa).

Zn(2+) contacts are provided by C19, C22, C34, and C37. The C4-type zinc-finger motif lies at C19–C37.

The protein belongs to the eukaryotic ribosomal protein eL37 family. Requires Zn(2+) as cofactor.

Functionally, binds to the 23S rRNA. The protein is Large ribosomal subunit protein eL37 of Sulfolobus acidocaldarius (strain ATCC 33909 / DSM 639 / JCM 8929 / NBRC 15157 / NCIMB 11770).